The sequence spans 550 residues: Methionine--tRNA ligase (550 aa).

The short motif at 13–23 is the 'HIGH' region element; it reads PYANGPLHFGH. Zn(2+)-binding residues include cysteine 145, cysteine 148, cysteine 158, and cysteine 161. The 'KMSKS' region signature appears at 331–335; sequence QFSKS. Lysine 334 is an ATP binding site.

This sequence belongs to the class-I aminoacyl-tRNA synthetase family. MetG type 1 subfamily. Monomer. The cofactor is Zn(2+).

Its subcellular location is the cytoplasm. It catalyses the reaction tRNA(Met) + L-methionine + ATP = L-methionyl-tRNA(Met) + AMP + diphosphate. Functionally, is required not only for elongation of protein synthesis but also for the initiation of all mRNA translation through initiator tRNA(fMet) aminoacylation. The sequence is that of Methionine--tRNA ligase (metG) from Chlamydia muridarum (strain MoPn / Nigg).